Reading from the N-terminus, the 443-residue chain is Thymidine phosphorylase (443 aa).

This sequence belongs to the thymidine/pyrimidine-nucleoside phosphorylase family. In terms of assembly, homodimer.

The catalysed reaction is thymidine + phosphate = 2-deoxy-alpha-D-ribose 1-phosphate + thymine. Its pathway is pyrimidine metabolism; dTMP biosynthesis via salvage pathway; dTMP from thymine: step 1/2. The enzymes which catalyze the reversible phosphorolysis of pyrimidine nucleosides are involved in the degradation of these compounds and in their utilization as carbon and energy sources, or in the rescue of pyrimidine bases for nucleotide synthesis. This chain is Thymidine phosphorylase, found in Shewanella denitrificans (strain OS217 / ATCC BAA-1090 / DSM 15013).